Reading from the N-terminus, the 464-residue chain is Glutamyl-tRNA reductase (464 aa).

Residues 47–50, Ser-145, 150–152, and Gln-156 contribute to the substrate site; these read TCNR and EPQ. Residue Cys-48 is the Nucleophile of the active site. 225-230 is a binding site for NADP(+); that stretch reads AAGEMN.

This sequence belongs to the glutamyl-tRNA reductase family. In terms of assembly, homodimer.

The enzyme catalyses (S)-4-amino-5-oxopentanoate + tRNA(Glu) + NADP(+) = L-glutamyl-tRNA(Glu) + NADPH + H(+). It functions in the pathway porphyrin-containing compound metabolism; protoporphyrin-IX biosynthesis; 5-aminolevulinate from L-glutamyl-tRNA(Glu): step 1/2. Its function is as follows. Catalyzes the NADPH-dependent reduction of glutamyl-tRNA(Glu) to glutamate 1-semialdehyde (GSA). In Psychrobacter cryohalolentis (strain ATCC BAA-1226 / DSM 17306 / VKM B-2378 / K5), this protein is Glutamyl-tRNA reductase.